Here is a 393-residue protein sequence, read N- to C-terminus: Mitogen-activated protein kinase 10 (393 aa).

The region spanning 60-345 (KPPIRPIGRG…VKEALAHPYL (286 aa)) is the Protein kinase domain. Residues 66-74 (IGRGACGIV) and Lys89 each bind ATP. The active-site Proton acceptor is the Asp186. A Phosphothreonine modification is found at Thr218. The TXY motif lies at 218 to 220 (TEY). Residue Tyr220 is modified to Phosphotyrosine. Residue Thr223 is modified to Phosphothreonine.

This sequence belongs to the protein kinase superfamily. CMGC Ser/Thr protein kinase family. MAP kinase subfamily. In terms of assembly, interacts with MKK2. In terms of processing, dually phosphorylated on Thr-218 and Tyr-220, which activates the enzyme.

The enzyme catalyses L-seryl-[protein] + ATP = O-phospho-L-seryl-[protein] + ADP + H(+). It carries out the reaction L-threonyl-[protein] + ATP = O-phospho-L-threonyl-[protein] + ADP + H(+). With respect to regulation, activated by threonine and tyrosine phosphorylation. This Arabidopsis thaliana (Mouse-ear cress) protein is Mitogen-activated protein kinase 10 (MPK10).